We begin with the raw amino-acid sequence, 440 residues long: Xylose isomerase (440 aa).

Catalysis depends on residues H100 and D103. Mg(2+) is bound by residues E231, E267, H270, D295, D306, D308, and D338.

This sequence belongs to the xylose isomerase family. In terms of assembly, homotetramer. Requires Mg(2+) as cofactor.

The protein resides in the cytoplasm. The catalysed reaction is alpha-D-xylose = alpha-D-xylulofuranose. This Burkholderia cenocepacia (strain ATCC BAA-245 / DSM 16553 / LMG 16656 / NCTC 13227 / J2315 / CF5610) (Burkholderia cepacia (strain J2315)) protein is Xylose isomerase.